We begin with the raw amino-acid sequence, 175 residues long: Major pollen allergen Pha a 5.4 (175 aa).

Belongs to the Poa p IX/Phl p VI allergen family.

The sequence is that of Major pollen allergen Pha a 5.4 from Phalaris aquatica (Canary grass).